The chain runs to 414 residues: MFSKDQTLAKTDAELWSAIQKENTRQQEHIELIASENYTSPAVMEAQGTQLTNKYAEGYPGKRYYGGCEYVDIVEQLAIDRLKQLYGADAANVQPNSGSQANQGVFLAVLKPGDTIMGMSLAEGGHLTHGMALNMSGKWFNVVSYGLNDKEEIDYDAMERLAREHKPKLIIAGASAYALRIDFERFAKIAKEIGAYFMVDMAHYAGLIAAGEYPNPVPFADFVTSTTHKSLRGPRGGFILMKAEHEKIINSAIFPGLQGGPLMHVIAGKAVAFKEALAPEFKTYQQQVVKNADALAKALIARGLRIVSNRTESHVMLVDLRAKKITGKDAENLLGSAHITCNKNAIPNDPEKPFVTSGIRLGSPAMTTRGFKEAEATKVGNLIADVLENPNDAATIERVKAEVKKLTDAFPVYG.

(6S)-5,6,7,8-tetrahydrofolate contacts are provided by residues L121 and 125–127 (GHL). Position 229 is an N6-(pyridoxal phosphate)lysine (K229).

Belongs to the SHMT family. As to quaternary structure, homodimer. It depends on pyridoxal 5'-phosphate as a cofactor.

The protein localises to the cytoplasm. It carries out the reaction (6R)-5,10-methylene-5,6,7,8-tetrahydrofolate + glycine + H2O = (6S)-5,6,7,8-tetrahydrofolate + L-serine. It functions in the pathway one-carbon metabolism; tetrahydrofolate interconversion. It participates in amino-acid biosynthesis; glycine biosynthesis; glycine from L-serine: step 1/1. In terms of biological role, catalyzes the reversible interconversion of serine and glycine with tetrahydrofolate (THF) serving as the one-carbon carrier. This reaction serves as the major source of one-carbon groups required for the biosynthesis of purines, thymidylate, methionine, and other important biomolecules. Also exhibits THF-independent aldolase activity toward beta-hydroxyamino acids, producing glycine and aldehydes, via a retro-aldol mechanism. The protein is Serine hydroxymethyltransferase of Janthinobacterium sp. (strain Marseille) (Minibacterium massiliensis).